Consider the following 393-residue polypeptide: MACSSSLSSKWASWGASSRPHPSVQPFVTRKNVVRYHKPTSELSYSPLTTTLSSNLDSQFMQVYETLKSELIHDPSFEFDDDSRQWVERMIDYNVPGGKMVRGYSVVDSYQLLKGEELTEDEAFLACALGWCTEWLQAFILVLDDIMDGSHTRRGQPCWFRLPEVGVVAINDGVLLRNHVHRILKKYFQGKPYYVHLLDLFNETEFQTISGQMIDTICRLAGQKDLSKYTMTLNRRIVQYKGSYYSCYLPIACALLMFGENLEDHVQVKDILVELGMYYQIQNDYLDTFGDPDVFGKTGTDIEECKCSWLIAKALELANEEQKKILSENYGINDPSKVAKVKELYHALDLKGAYEDYETNLYETSMTSIKAHPNIAVQAVLKSCLEKMYKGHK.

The span at 1–18 (MACSSSLSSKWASWGASS) shows a compositional bias: low complexity. Residues 1 to 22 (MACSSSLSSKWASWGASSRPHP) form a disordered region. Residues 1–53 (MACSSSLSSKWASWGASSRPHPSVQPFVTRKNVVRYHKPTSELSYSPLTTTLS) constitute a chloroplast transit peptide. Dimethylallyl diphosphate is bound by residues Lys99, Arg102, and Gln137. Mg(2+) is bound by residues Asp144 and Asp148. The dimethylallyl diphosphate site is built by Arg153, Arg154, Lys241, Gln280, Asp287, Lys297, and Lys306.

This sequence belongs to the FPP/GGPP synthase family. It depends on Mg(2+) as a cofactor. Restricted to glandular trichomes during achene maturation. Expressed in flowers and in both ray and disk florets.

Its subcellular location is the plastid. The protein resides in the chloroplast. The catalysed reaction is 2 dimethylallyl diphosphate = (R,R)-chrysanthemyl diphosphate + diphosphate. It catalyses the reaction (R,R)-chrysanthemyl diphosphate + H2O = (R,R)-chrysanthemol + diphosphate. The enzyme catalyses (R)-lavandulyl diphosphate + H2O = (R)-lavandulol + diphosphate. Its pathway is isoprenoid biosynthesis. Component of the monoterpenoid pyrethrins biosynthesis; pyrethrins are widely used plant-derived pesticide. Catalyzes the condensation of two molecules of dimethylallyl diphosphate to produce chrysanthemyl diphosphate (CPP), a monoterpene with a non-head-to-tail or irregular c1'-2-3 linkage between isoprenoid units. In a second step, hydrolyzes the diphosphate moiety of CPP to form chrysanthemol. With a lower efficiency, can also converts dimethylallyl diphosphate into lavandulyl diphosphate (LPP), and subsequently LPP into lavandulol. This Tanacetum cinerariifolium (Dalmatian daisy) protein is Bifunctional chrysanthemol synthase, chloroplastic.